The primary structure comprises 257 residues: Imidazole glycerol phosphate synthase subunit HisF (257 aa).

Catalysis depends on residues Asp-11 and Asp-130.

Belongs to the HisA/HisF family. Heterodimer of HisH and HisF.

The protein localises to the cytoplasm. It catalyses the reaction 5-[(5-phospho-1-deoxy-D-ribulos-1-ylimino)methylamino]-1-(5-phospho-beta-D-ribosyl)imidazole-4-carboxamide + L-glutamine = D-erythro-1-(imidazol-4-yl)glycerol 3-phosphate + 5-amino-1-(5-phospho-beta-D-ribosyl)imidazole-4-carboxamide + L-glutamate + H(+). Its pathway is amino-acid biosynthesis; L-histidine biosynthesis; L-histidine from 5-phospho-alpha-D-ribose 1-diphosphate: step 5/9. Its function is as follows. IGPS catalyzes the conversion of PRFAR and glutamine to IGP, AICAR and glutamate. The HisF subunit catalyzes the cyclization activity that produces IGP and AICAR from PRFAR using the ammonia provided by the HisH subunit. This chain is Imidazole glycerol phosphate synthase subunit HisF, found in Shewanella loihica (strain ATCC BAA-1088 / PV-4).